The primary structure comprises 221 residues: Thiamine-phosphate synthase (221 aa).

4-amino-2-methyl-5-(diphosphooxymethyl)pyrimidine contacts are provided by residues glutamine 49–lysine 53 and asparagine 85. Aspartate 86 and aspartate 105 together coordinate Mg(2+). Serine 124 serves as a coordination point for 4-amino-2-methyl-5-(diphosphooxymethyl)pyrimidine. Threonine 151–serine 153 contacts 2-[(2R,5Z)-2-carboxy-4-methylthiazol-5(2H)-ylidene]ethyl phosphate. Lysine 154 contributes to the 4-amino-2-methyl-5-(diphosphooxymethyl)pyrimidine binding site. 2-[(2R,5Z)-2-carboxy-4-methylthiazol-5(2H)-ylidene]ethyl phosphate contacts are provided by residues glycine 183 and isoleucine 203–serine 204.

This sequence belongs to the thiamine-phosphate synthase family. Mg(2+) is required as a cofactor.

It carries out the reaction 2-[(2R,5Z)-2-carboxy-4-methylthiazol-5(2H)-ylidene]ethyl phosphate + 4-amino-2-methyl-5-(diphosphooxymethyl)pyrimidine + 2 H(+) = thiamine phosphate + CO2 + diphosphate. The catalysed reaction is 2-(2-carboxy-4-methylthiazol-5-yl)ethyl phosphate + 4-amino-2-methyl-5-(diphosphooxymethyl)pyrimidine + 2 H(+) = thiamine phosphate + CO2 + diphosphate. It catalyses the reaction 4-methyl-5-(2-phosphooxyethyl)-thiazole + 4-amino-2-methyl-5-(diphosphooxymethyl)pyrimidine + H(+) = thiamine phosphate + diphosphate. Its pathway is cofactor biosynthesis; thiamine diphosphate biosynthesis; thiamine phosphate from 4-amino-2-methyl-5-diphosphomethylpyrimidine and 4-methyl-5-(2-phosphoethyl)-thiazole: step 1/1. Functionally, condenses 4-methyl-5-(beta-hydroxyethyl)thiazole monophosphate (THZ-P) and 2-methyl-4-amino-5-hydroxymethyl pyrimidine pyrophosphate (HMP-PP) to form thiamine monophosphate (TMP). This Histophilus somni (strain 129Pt) (Haemophilus somnus) protein is Thiamine-phosphate synthase.